Reading from the N-terminus, the 159-residue chain is Ribonuclease H (159 aa).

The 142-residue stretch at 1–142 (MHKQVEIFTD…CDELAKAAAQ (142 aa)) folds into the RNase H type-1 domain. Positions 10, 48, 70, and 134 each coordinate Mg(2+). Positions 135–159 (ELAKAAAQSPTKEDTGYLESQQDKT) are disordered. The segment covering 145 to 159 (TKEDTGYLESQQDKT) has biased composition (basic and acidic residues).

The protein belongs to the RNase H family. In terms of assembly, monomer. It depends on Mg(2+) as a cofactor.

Its subcellular location is the cytoplasm. The enzyme catalyses Endonucleolytic cleavage to 5'-phosphomonoester.. In terms of biological role, endonuclease that specifically degrades the RNA of RNA-DNA hybrids. This is Ribonuclease H from Proteus mirabilis (strain HI4320).